Reading from the N-terminus, the 209-residue chain is Large ribosomal subunit protein uL3 (209 aa).

Residues 141-163 (RAVGSMGASSDPSRTFKNKRMPG) form a disordered region.

This sequence belongs to the universal ribosomal protein uL3 family. As to quaternary structure, part of the 50S ribosomal subunit. Forms a cluster with proteins L14 and L19.

Functionally, one of the primary rRNA binding proteins, it binds directly near the 3'-end of the 23S rRNA, where it nucleates assembly of the 50S subunit. The chain is Large ribosomal subunit protein uL3 from Clostridium botulinum (strain Langeland / NCTC 10281 / Type F).